A 366-amino-acid polypeptide reads, in one-letter code: Purple acid phosphatase 3 (366 aa).

The first 32 residues, 1-32 (MTYIYRDTKITTKSTIPFLIFFLFCFSNLSMA), serve as a signal peptide directing secretion. Asp-81 serves as a coordination point for Fe cation. Residue Asn-89 is glycosylated (N-linked (GlcNAc...) asparagine). 2 residues coordinate Fe cation: Asp-114 and Tyr-117. Asp-114 lines the Zn(2+) pocket. Residues Asn-152 and His-246 each contribute to the Zn(2+) site. The active-site Proton donor is the His-255. His-281 provides a ligand contact to Zn(2+). 281–283 (HDH) lines the substrate pocket. Residue His-283 participates in Fe cation binding.

The protein belongs to the metallophosphoesterase superfamily. Purple acid phosphatase family. In terms of assembly, homodimer. Fe cation serves as cofactor. The cofactor is Zn(2+). Expressed in stems, leaves, flowers and siliques.

It localises to the secreted. The enzyme catalyses a phosphate monoester + H2O = an alcohol + phosphate. This Arabidopsis thaliana (Mouse-ear cress) protein is Purple acid phosphatase 3 (PAP3).